A 438-amino-acid chain; its full sequence is UDP-N-acetylmuramoylalanine--D-glutamate ligase (438 aa).

112–118 serves as a coordination point for ATP; sequence GSNGKST.

This sequence belongs to the MurCDEF family.

The protein localises to the cytoplasm. It catalyses the reaction UDP-N-acetyl-alpha-D-muramoyl-L-alanine + D-glutamate + ATP = UDP-N-acetyl-alpha-D-muramoyl-L-alanyl-D-glutamate + ADP + phosphate + H(+). It participates in cell wall biogenesis; peptidoglycan biosynthesis. In terms of biological role, cell wall formation. Catalyzes the addition of glutamate to the nucleotide precursor UDP-N-acetylmuramoyl-L-alanine (UMA). In Pectobacterium atrosepticum (strain SCRI 1043 / ATCC BAA-672) (Erwinia carotovora subsp. atroseptica), this protein is UDP-N-acetylmuramoylalanine--D-glutamate ligase.